Consider the following 256-residue polypeptide: tRNA-cytidine(32) 2-sulfurtransferase (256 aa).

The PP-loop motif motif lies at 35 to 40 (SGGKDS). [4Fe-4S] cluster contacts are provided by Cys110, Cys113, and Cys201.

The protein belongs to the TtcA family. In terms of assembly, homodimer. It depends on Mg(2+) as a cofactor. Requires [4Fe-4S] cluster as cofactor.

Its subcellular location is the cytoplasm. The catalysed reaction is cytidine(32) in tRNA + S-sulfanyl-L-cysteinyl-[cysteine desulfurase] + AH2 + ATP = 2-thiocytidine(32) in tRNA + L-cysteinyl-[cysteine desulfurase] + A + AMP + diphosphate + H(+). The protein operates within tRNA modification. Catalyzes the ATP-dependent 2-thiolation of cytidine in position 32 of tRNA, to form 2-thiocytidine (s(2)C32). The sulfur atoms are provided by the cysteine/cysteine desulfurase (IscS) system. The polypeptide is tRNA-cytidine(32) 2-sulfurtransferase (Coxiella burnetii (strain CbuG_Q212) (Coxiella burnetii (strain Q212))).